The primary structure comprises 572 residues: Chaperonin CPN60-like 2, mitochondrial (572 aa).

A mitochondrion-targeting transit peptide spans 1 to 31; the sequence is MYRVLSKLSSSIGSSTSRKLVSGRIISSRNY.

It belongs to the chaperonin (HSP60) family.

The protein localises to the mitochondrion. Functionally, implicated in mitochondrial protein import and macromolecular assembly. May facilitate the correct folding of imported proteins. May also prevent misfolding and promote the refolding and proper assembly of unfolded polypeptides generated under stress conditions in the mitochondrial matrix. The polypeptide is Chaperonin CPN60-like 2, mitochondrial (Arabidopsis thaliana (Mouse-ear cress)).